A 232-amino-acid polypeptide reads, in one-letter code: MGRSPCCEKAHTNKGAWTKEEDDRLVAYIRAHGEGCWRSLPKAAGLLRCGKSCRLRWINYLRPDLKRGNFTEEEDELIIKLHSLLGNKWSLIAGRLPGRTDNEIKNYWNTHIRRKLLSRGIDPTTHRSINDGTASQDQVTTISFSNANSKEEDTKHKVAVDIMIKEENSPVQERCPDLNLDLKISPPCQQQINYHQENLKTGGRNGSSTLCFVCRLGIQNSKDCSCSDGVGN.

HTH myb-type domains lie at 9–61 and 62–116; these read KAHT…INYL and RPDL…RRKL. 2 consecutive DNA-binding regions (H-T-H motif) follow at residues 37–61 and 89–112; these read WRSLPKAAGLLRCGKSCRLRWINYL and WSLIAGRLPGRTDNEIKNYWNTHI.

As to expression, expressed in roots, stems, leaves, seed pods and flowers.

Its subcellular location is the nucleus. Functionally, transcription factor. This Antirrhinum majus (Garden snapdragon) protein is Myb-related protein 308.